The chain runs to 71 residues: Protein PSY3 (71 aa).

Positions 1-25 are cleaved as a signal peptide; the sequence is MGYSSSSRIGLCLFLFFTFALLSSA. Positions 26 to 49 are excised as a propeptide; the sequence is RISLSFSENEMTVVPERSLMVSTN. The interval 47 to 71 is disordered; it reads STNDYSDPTANGRHDPPRGGRGRRR. Tyr-51 carries the sulfotyrosine modification. The residue at position 63 (Pro-63) is a 4-hydroxyproline. O-linked (Ara...) hydroxyproline glycosylation occurs at Pro-63. Positions 66 to 71 are excised as a propeptide; that stretch reads GRGRRR.

Belongs to the sulfated-peptide plant hormone family. The sulfation and the glycosylation are required for full activity.

The protein localises to the secreted. Promotes cellular proliferation and expansion. This Arabidopsis thaliana (Mouse-ear cress) protein is Protein PSY3 (PSY3).